A 502-amino-acid polypeptide reads, in one-letter code: Probable glycerol kinase (502 aa).

Residue threonine 11 participates in substrate binding. Arginine 15 is an ATP binding site. Substrate is bound by residues arginine 85, tyrosine 140, and aspartate 246. ATP contacts are provided by residues threonine 268, glycine 313, and glycine 416–asparagine 420.

The protein belongs to the FGGY kinase family.

It catalyses the reaction glycerol + ATP = sn-glycerol 3-phosphate + ADP + H(+). It functions in the pathway polyol metabolism; glycerol degradation via glycerol kinase pathway; sn-glycerol 3-phosphate from glycerol: step 1/1. The protein is Probable glycerol kinase of Caenorhabditis elegans.